The following is a 146-amino-acid chain: Angiogenin (146 aa).

A signal peptide spans 1–24 (MVMGLGLFLLVFMLGLGLTPPTLA). A Pyrrolidone carboxylic acid modification is found at Gln-25. His-37 acts as the Proton acceptor in catalysis. Arg-45 contributes to the tRNA binding site. Intrachain disulfides connect Cys-50-Cys-105, Cys-63-Cys-116, and Cys-81-Cys-131. The short motif at 55–59 (RRRGL) is the Nucleolar localization signal element. The tRNA site is built by Cys-105 and Ile-127. His-138 acts as the Proton donor in catalysis.

The protein belongs to the pancreatic ribonuclease family. In terms of assembly, homodimer. Interacts with RNH1; inhibiting ANG ribonuclease activity. Interacts with PCNA.

It is found in the secreted. The protein localises to the nucleus. It localises to the nucleolus. Its subcellular location is the cytoplasm. The protein resides in the stress granule. Its activity is regulated as follows. Has weak tRNA ribonuclease activity by itself due to partial autoinhibition by its C-terminus, which folds into a short alpha-helix that partially occludes the substrate-binding site. In absence of stress, the ribonuclease activity is inhibited by RNH1 in the cytoplasm. In response to stress, dissociates from RNH1 in the cytoplasm and associates with cytoplasmic ribosomes with vacant A-sites: ribosomes directly activate the tRNA ribonuclease activity of ANG by refolding the C-terminal alpha-helix. In response to stress, the angiogenic activity of ANG is inhibited by RNH1 in the nucleus. Secreted ribonuclease that can either promote or restrict cell proliferation of target cells, depending on the context. Endocytosed in target cells via its receptor PLXNB2 and translocates to the cytoplasm or nucleus. Under stress conditions, localizes to the cytoplasm and promotes the assembly of stress granules (SGs): specifically cleaves a subset of tRNAs within anticodon loops to produce tRNA-derived stress-induced fragments (tiRNAs), resulting in translation repression and inhibition of cell proliferation. tiRNas also prevent formation of apoptosome, thereby promoting cell survival. Preferentially cleaves RNAs between a pyrimidine and an adenosine residue, suggesting that it cleaves the anticodon loop of tRNA(Ala) (32-UUAGCAU-38) after positions 33 and 36. Cleaves a subset of tRNAs, including tRNA(Ala), tRNA(Glu), tRNA(Gly), tRNA(Lys), tRNA(Val), tRNA(His), tRNA(Asp) and tRNA(Sec). Under growth conditions and in differentiated cells, translocates to the nucleus and stimulates ribosomal RNA (rRNA) transcription, including that containing the initiation site sequences of 45S rRNA, thereby promoting cell growth and proliferation. Angiogenin induces vascularization of normal and malignant tissues via its ability to promote rRNA transcription. Involved in hematopoietic stem and progenitor cell (HSPC) growth and survival by promoting rRNA transcription in growth conditions and inhibiting translation in response to stress, respectively. Mediates the crosstalk between myeloid and intestinal epithelial cells to protect the intestinal epithelial barrier integrity: secreted by myeloid cells and promotes intestinal epithelial cells proliferation and survival. Also mediates osteoclast-endothelial cell crosstalk in growing bone: produced by osteoclasts and protects the neighboring vascular cells against senescence by promoting rRNA transcription. This Rhinopithecus avunculus (Tonkin snub-nosed monkey) protein is Angiogenin (ANG).